The primary structure comprises 257 residues: MLILVSPAKTLDFEQPPLTQTHTRPDFLAYSQELIQVCQRLTPSDIATLMKVSDNIAGLNAARFGEWTPDYSIDNAKQAIFAFRGDVYTGFDADTLTPEQLERTQSQLRILSGLYGLLRPLDLILPYRLEMGTALANPKGKNLYDFWGNTLTEAVNNAVAAQGDDIIINLASNEYFKAIKRKQLAGQLITPVFKDFKNGQYKVISFFAKKARGMMARYIIDQQVSSIEELKAFDVAGYYYSEELSKPNEPTFLREAQ.

This sequence belongs to the UPF0246 family.

The protein is UPF0246 protein Shewana3_3143 of Shewanella sp. (strain ANA-3).